A 526-amino-acid polypeptide reads, in one-letter code: Peptide chain release factor 3 (526 aa).

Residues 9 to 277 (DKRRTFAIIS…GIVEWAPKPL (269 aa)) enclose the tr-type G domain. GTP contacts are provided by residues 18-25 (SHPDAGKT), 86-90 (DTPGH), and 140-143 (NKCD).

Belongs to the TRAFAC class translation factor GTPase superfamily. Classic translation factor GTPase family. PrfC subfamily.

The protein resides in the cytoplasm. Increases the formation of ribosomal termination complexes and stimulates activities of RF-1 and RF-2. It binds guanine nucleotides and has strong preference for UGA stop codons. It may interact directly with the ribosome. The stimulation of RF-1 and RF-2 is significantly reduced by GTP and GDP, but not by GMP. The sequence is that of Peptide chain release factor 3 from Shewanella frigidimarina (strain NCIMB 400).